Reading from the N-terminus, the 591-residue chain is Aspartate--tRNA(Asp/Asn) ligase (591 aa).

Residue Glu-174 participates in L-aspartate binding. The segment at 198 to 201 is aspartate; it reads QLFK. Arg-220 contacts L-aspartate. Residues 220-222 and Gln-229 each bind ATP; that span reads RDE. His-450 is a binding site for L-aspartate. Glu-483 provides a ligand contact to ATP. L-aspartate is bound at residue Arg-490. 535 to 538 is a binding site for ATP; sequence GLDR.

Belongs to the class-II aminoacyl-tRNA synthetase family. Type 1 subfamily. Homodimer.

The protein resides in the cytoplasm. It catalyses the reaction tRNA(Asx) + L-aspartate + ATP = L-aspartyl-tRNA(Asx) + AMP + diphosphate. Aspartyl-tRNA synthetase with relaxed tRNA specificity since it is able to aspartylate not only its cognate tRNA(Asp) but also tRNA(Asn). Reaction proceeds in two steps: L-aspartate is first activated by ATP to form Asp-AMP and then transferred to the acceptor end of tRNA(Asp/Asn). This chain is Aspartate--tRNA(Asp/Asn) ligase, found in Pseudomonas syringae pv. syringae (strain B728a).